The sequence spans 126 residues: UPF0102 protein BH12350 (126 aa).

This sequence belongs to the UPF0102 family.

This is UPF0102 protein BH12350 from Bartonella henselae (strain ATCC 49882 / DSM 28221 / CCUG 30454 / Houston 1) (Rochalimaea henselae).